The following is a 425-amino-acid chain: Serine--tRNA ligase (425 aa).

231–233 (TAE) provides a ligand contact to L-serine. Residue 262-264 (RSE) coordinates ATP. Residue Glu285 participates in L-serine binding. 349–352 (EISS) is an ATP binding site. Ser385 lines the L-serine pocket.

The protein belongs to the class-II aminoacyl-tRNA synthetase family. Type-1 seryl-tRNA synthetase subfamily. In terms of assembly, homodimer. The tRNA molecule binds across the dimer.

It is found in the cytoplasm. The catalysed reaction is tRNA(Ser) + L-serine + ATP = L-seryl-tRNA(Ser) + AMP + diphosphate + H(+). It carries out the reaction tRNA(Sec) + L-serine + ATP = L-seryl-tRNA(Sec) + AMP + diphosphate + H(+). It participates in aminoacyl-tRNA biosynthesis; selenocysteinyl-tRNA(Sec) biosynthesis; L-seryl-tRNA(Sec) from L-serine and tRNA(Sec): step 1/1. Functionally, catalyzes the attachment of serine to tRNA(Ser). Is also able to aminoacylate tRNA(Sec) with serine, to form the misacylated tRNA L-seryl-tRNA(Sec), which will be further converted into selenocysteinyl-tRNA(Sec). This is Serine--tRNA ligase from Bartonella henselae (strain ATCC 49882 / DSM 28221 / CCUG 30454 / Houston 1) (Rochalimaea henselae).